A 32-amino-acid polypeptide reads, in one-letter code: Trypsin inhibitor 2b (32 aa).

Cystine bridges form between Cys-3/Cys-20, Cys-10/Cys-22, and Cys-16/Cys-29.

The protein belongs to the protease inhibitor I7 (squash-type serine protease inhibitor) family.

Its subcellular location is the secreted. In terms of biological role, inhibits trypsin. This is Trypsin inhibitor 2b from Cucumis sativus (Cucumber).